Here is a 253-residue protein sequence, read N- to C-terminus: uncharacterized protein (253 aa).

NADP(+) is bound at residue 10–35 (ISGAASKRGIGRATAELFASHGARVA). Ser-144 lines the substrate pocket. Tyr-159 (proton acceptor) is an active-site residue.

It belongs to the short-chain dehydrogenases/reductases (SDR) family.

This is an uncharacterized protein from Sinorhizobium fredii (strain NBRC 101917 / NGR234).